The sequence spans 709 residues: Elongation factor G (709 aa).

The region spanning 10-295 is the tr-type G domain; the sequence is NQVRNIGIMA…AVVDYLPSPE (286 aa). Residues 19 to 26, 91 to 95, and 145 to 148 contribute to the GTP site; these read AHIDAGKT, DTPGH, and NKMD.

The protein belongs to the TRAFAC class translation factor GTPase superfamily. Classic translation factor GTPase family. EF-G/EF-2 subfamily.

It is found in the cytoplasm. Catalyzes the GTP-dependent ribosomal translocation step during translation elongation. During this step, the ribosome changes from the pre-translocational (PRE) to the post-translocational (POST) state as the newly formed A-site-bound peptidyl-tRNA and P-site-bound deacylated tRNA move to the P and E sites, respectively. Catalyzes the coordinated movement of the two tRNA molecules, the mRNA and conformational changes in the ribosome. This Bifidobacterium animalis subsp. lactis (strain AD011) protein is Elongation factor G.